The following is a 774-amino-acid chain: E3 ubiquitin-protein ligase UHRF1 (774 aa).

Residues 1–78 (MWIQVRTMDG…IQLLVRQSLA (78 aa)) form the Ubiquitin-like domain. Phosphoserine occurs at positions 76, 91, 93, 95, and 161. The tract at residues 83-120 (TKERDSELSDSDSGYGVGHSESDKSSTHGEGTADGDDK) is disordered. 2 tudor-like regions span residues 129–205 (GLYK…ARAR) and 212–280 (DLEV…IELP). Residue Lys-276 forms a Glycyl lysine isopeptide (Lys-Gly) (interchain with G-Cter in SUMO2) linkage. The residue at position 284 (Ser-284) is a Phosphoserine. The linker stretch occupies residues 293 to 298 (RKSGPS). Ser-295 is modified (phosphoserine; by PKA). The PHD-type zinc-finger motif lies at 296-363 (GPSCQYCKDD…EWYCPSCRTD (68 aa)). Histone H3R2me0 binding stretches follow at residues 330 to 334 (CDECD) and 350 to 352 (PPE). Ser-365 is modified (phosphoserine). Lys-382 is covalently cross-linked (Glycyl lysine isopeptide (Lys-Gly) (interchain with G-Cter in SUMO2)). A methyl-CpG binding and interaction with HDAC1 region spans residues 382–605 (KMASATSSSR…QLGLTMQYPE (224 aa)). Residue Lys-396 is modified to N6-acetyllysine. A YDG domain is found at 416–578 (GPIPGVPVGT…FIVWRYLLRR (163 aa)). Residues 442 to 443 (HV) are required to promote base flipping. DNA-binding positions include 460–461 (AG) and Asp-466. Required for formation of a 5-methylcytosine-binding pocket stretches follow at residues 463-466 (YEDD) and 475-478 (YTGS). At Ser-511 the chain carries Phosphoserine. Residue Lys-542 is modified to N6-acetyllysine; alternate. Residue Lys-542 forms a Glycyl lysine isopeptide (Lys-Gly) (interchain with G-Cter in SUMO2); alternate linkage. The interval 616 to 657 (KNRKRPAKALEQGPSSSKIGKSKRKSTGPATTSPRVSKKSKL) is disordered. Ser-631 is subject to Phosphoserine; by CDK1. 2 positions are modified to phosphoserine: Ser-641 and Ser-648. Lys-656 is covalently cross-linked (Glycyl lysine isopeptide (Lys-Gly) (interchain with G-Cter in SUMO2)). The segment at 705–744 (CICCQELVFRPVTTVCQHNVCKDCLDRSFRAQVFSCPACR) adopts an RING-type zinc-finger fold. Phosphoserine is present on Ser-751.

In terms of assembly, interacts with DNMT3A and DNMT3B. Interacts with DNMT1; the interaction is direct. Interacts with USP7; leading to its deubiquitination. Interacts with histone H3. Interacts with HDAC1, but not with HDAC2. Interacts with BLTP3A. Interacts with PML. Interacts with EHMT2. Binds methylated CpG containing oligonucleotides. Interacts with ZNF263; recruited to the SIX3 promoter along with other proteins involved in chromatin modification and transcriptional corepression where it contributes to transcriptional repression. Interacts with UHRF2. Interacts with FANCD2. Interacts with TET1 isoform 2; this interaction induces the recruitment of TET1 isoform 2 to replicating heterochromatin. Post-translationally, phosphorylation at Ser-295 of the linker region decreases the binding to H3K9me3. Phosphorylation at Ser-631 by CDK1 during M phase impairs interaction with USP7, preventing deubiquitination and leading to degradation by the proteasome. In terms of processing, ubiquitinated; which leads to proteasomal degradation. Autoubiquitinated; interaction with USP7 leads to deubiquitination and prevents degradation. Ubiquitination and degradation takes place during M phase, when phosphorylation at Ser-631 prevents interaction with USP7 and subsequent deubiquitination. Polyubiquitination may be stimulated by DNA damage.

It localises to the nucleus. It carries out the reaction S-ubiquitinyl-[E2 ubiquitin-conjugating enzyme]-L-cysteine + [acceptor protein]-L-lysine = [E2 ubiquitin-conjugating enzyme]-L-cysteine + N(6)-ubiquitinyl-[acceptor protein]-L-lysine.. It participates in protein modification; protein ubiquitination. In terms of biological role, multidomain protein that acts as a key epigenetic regulator by bridging DNA methylation and chromatin modification. Specifically recognizes and binds hemimethylated DNA at replication forks via its YDG domain and recruits DNMT1 methyltransferase to ensure faithful propagation of the DNA methylation patterns through DNA replication. In addition to its role in maintenance of DNA methylation, also plays a key role in chromatin modification: through its tudor-like regions and PHD-type zinc fingers, specifically recognizes and binds histone H3 trimethylated at 'Lys-9' (H3K9me3) and unmethylated at 'Arg-2' (H3R2me0), respectively, and recruits chromatin proteins. Enriched in pericentric heterochromatin where it recruits different chromatin modifiers required for this chromatin replication. Also localizes to euchromatic regions where it negatively regulates transcription possibly by impacting DNA methylation and histone modifications. Has E3 ubiquitin-protein ligase activity by mediating the ubiquitination of target proteins such as histone H3 and PML. It is still unclear how E3 ubiquitin-protein ligase activity is related to its role in chromatin in vivo. Plays a role in DNA repair by cooperating with UHRF2 to ensure recruitment of FANCD2 to interstrand cross-links (ICLs) leading to FANCD2 activation. Plays a pivotal role in the establishment of correct spindle architecture by catalyzing the 'Lys-63'-linked ubiquitination of KIF11, thereby controlling KIF11 localization on the spindle. This is E3 ubiquitin-protein ligase UHRF1 (Uhrf1) from Rattus norvegicus (Rat).